Here is a 195-residue protein sequence, read N- to C-terminus: Small ribosomal subunit protein uS10c (195 aa).

A chloroplast-targeting transit peptide spans Met1–Phe59.

It belongs to the universal ribosomal protein uS10 family. In terms of assembly, component of the chloroplast small ribosomal subunit (SSU). Mature 70S chloroplast ribosomes of higher plants consist of a small (30S) and a large (50S) subunit. The 30S small subunit contains 1 molecule of ribosomal RNA (16S rRNA) and 24 different proteins. The 50S large subunit contains 3 rRNA molecules (23S, 5S and 4.5S rRNA) and 33 different proteins.

Its subcellular location is the plastid. It is found in the chloroplast. Its function is as follows. Component of the chloroplast ribosome (chloro-ribosome), a dedicated translation machinery responsible for the synthesis of chloroplast genome-encoded proteins, including proteins of the transcription and translation machinery and components of the photosynthetic apparatus. The polypeptide is Small ribosomal subunit protein uS10c (RPS10) (Spinacia oleracea (Spinach)).